Consider the following 112-residue polypeptide: Small ribosomal subunit protein bS6 (112 aa).

This sequence belongs to the bacterial ribosomal protein bS6 family.

Functionally, binds together with bS18 to 16S ribosomal RNA. The protein is Small ribosomal subunit protein bS6 of Legionella pneumophila (strain Paris).